A 462-amino-acid chain; its full sequence is tRNA-2-methylthio-N(6)-dimethylallyladenosine synthase (462 aa).

The region spanning 2–117 (KRYFIHTFGC…LPDIIGRVSA (116 aa)) is the MTTase N-terminal domain. Residues Cys-11, Cys-47, Cys-80, Cys-157, Cys-161, and Cys-164 each contribute to the [4Fe-4S] cluster site. The Radical SAM core domain occupies 143-372 (SRGKVTEFVT…QKLQRRISGE (230 aa)). In terms of domain architecture, TRAM spans 375–437 (AALVGSEVEV…PNQLAGKQVA (63 aa)).

Belongs to the methylthiotransferase family. MiaB subfamily. As to quaternary structure, monomer. Requires [4Fe-4S] cluster as cofactor.

Its subcellular location is the cytoplasm. It carries out the reaction N(6)-dimethylallyladenosine(37) in tRNA + (sulfur carrier)-SH + AH2 + 2 S-adenosyl-L-methionine = 2-methylsulfanyl-N(6)-dimethylallyladenosine(37) in tRNA + (sulfur carrier)-H + 5'-deoxyadenosine + L-methionine + A + S-adenosyl-L-homocysteine + 2 H(+). Catalyzes the methylthiolation of N6-(dimethylallyl)adenosine (i(6)A), leading to the formation of 2-methylthio-N6-(dimethylallyl)adenosine (ms(2)i(6)A) at position 37 in tRNAs that read codons beginning with uridine. This Myxococcus xanthus (strain DK1622) protein is tRNA-2-methylthio-N(6)-dimethylallyladenosine synthase.